The sequence spans 172 residues: Ribosome maturation factor RimM (172 aa).

Residues 94 to 167 enclose the PRC barrel domain; the sequence is EGSYYYKDII…VAHVIVPEGL (74 aa).

The protein belongs to the RimM family. Binds ribosomal protein uS19.

The protein localises to the cytoplasm. In terms of biological role, an accessory protein needed during the final step in the assembly of 30S ribosomal subunit, possibly for assembly of the head region. Essential for efficient processing of 16S rRNA. May be needed both before and after RbfA during the maturation of 16S rRNA. It has affinity for free ribosomal 30S subunits but not for 70S ribosomes. The polypeptide is Ribosome maturation factor RimM (Lacticaseibacillus paracasei (strain ATCC 334 / BCRC 17002 / CCUG 31169 / CIP 107868 / KCTC 3260 / NRRL B-441) (Lactobacillus paracasei)).